Consider the following 610-residue polypeptide: Nuclear factor 7, ovary (610 aa).

The Tudor-knot domain maps to asparagine 21–valine 75. A disordered region spans residues proline 79 to alanine 127. Threonine 104 bears the Phosphothreonine; by CDK1 mark. Basic and acidic residues predominate over residues arginine 108 to alanine 127. An RING-type zinc finger spans residues cysteine 146–lysine 186. The segment at arginine 220–isoleucine 261 adopts a B box-type zinc-finger fold. Positions 225, 228, 247, and 253 each coordinate Zn(2+). A coiled-coil region spans residues aspartate 295–serine 374. The region spanning proline 415–glutamine 610 is the B30.2/SPRY domain.

As to quaternary structure, monomer. In terms of tissue distribution, abundant in oocytes. At the neurula stage, low expression in dorsal embryo region including neural folds and somites.

It is found in the nucleus. Transcription factor that determines dorsal-ventral body axis. This is Nuclear factor 7, ovary from Xenopus laevis (African clawed frog).